The following is a 256-amino-acid chain: Hydroxyacylglutathione hydrolase (256 aa).

Positions 54, 56, 58, 59, 113, 136, and 174 each coordinate Zn(2+).

It belongs to the metallo-beta-lactamase superfamily. Glyoxalase II family. As to quaternary structure, monomer. Zn(2+) serves as cofactor.

It carries out the reaction an S-(2-hydroxyacyl)glutathione + H2O = a 2-hydroxy carboxylate + glutathione + H(+). It participates in secondary metabolite metabolism; methylglyoxal degradation; (R)-lactate from methylglyoxal: step 2/2. Thiolesterase that catalyzes the hydrolysis of S-D-lactoyl-glutathione to form glutathione and D-lactic acid. The sequence is that of Hydroxyacylglutathione hydrolase from Cyanothece sp. (strain PCC 7425 / ATCC 29141).